The sequence spans 989 residues: DEAD-box ATP-dependent RNA helicase 45 (989 aa).

2 stretches are compositionally biased toward basic and acidic residues: residues 1-39 (MLEKSKSRKENDRKDRDRSKKENGRRDTTEMRSRVKRCD) and 64-101 (RDSKRRGEDKGRGRRERDRDRGKYLKRDRERREREKEK). 2 disordered regions span residues 1–248 (MLEK…AADE) and 305–330 (QGEDSDSDYSEPKSDDDPSLDEDDEE). Residues 88–182 (LKRDRERRER…ELKRQNEEAQ (95 aa)) adopt a coiled-coil conformation. A Phosphoserine modification is found at Ser-119. Residues 134 to 179 (SRHGDDDVEKKTRDEQVEDEQKQLAEEVEKRRRRVQEWQELKRQNE) are compositionally biased toward basic and acidic residues. The residue at position 200 (Ser-200) is a Phosphoserine. The segment covering 203-222 (EVKSDSEMDVDRDTKLENGG) has biased composition (basic and acidic residues). Over residues 230 to 239 (ENETAVTVSE) the composition is skewed to polar residues. Acidic residues predominate over residues 321-330 (DPSLDEDDEE). The Q motif signature appears at 396-424 (QFWHQTGLTSKILDTLKKLNYEKPMPIQA). Residues 427 to 605 (LPIIMSGRDC…RKVLNKPVEI (179 aa)) form the Helicase ATP-binding domain. 440–447 (AKTGSGKT) lines the ATP pocket. Residues 553–556 (DEAD) carry the DEAD box motif. Residues 590-748 (QVETLARKVL…PVPDDVKAVA (159 aa)) enclose the Helicase C-terminal domain.

It belongs to the DEAD box helicase family. DDX46/PRP5 subfamily.

It catalyses the reaction ATP + H2O = ADP + phosphate + H(+). This is DEAD-box ATP-dependent RNA helicase 45 (RH45) from Arabidopsis thaliana (Mouse-ear cress).